The following is a 713-amino-acid chain: Polyribonucleotide nucleotidyltransferase (713 aa).

2 residues coordinate Mg(2+): Asp495 and Asp501. The KH domain occupies 562 to 621 (PRLLTLKIPVDMIGLVIGPGGKTIKRIVEETGAKVDIEDDGTVVVSSIDGAKALAAKQII). The 70-residue stretch at 631-700 (DKVYLGTVTR…QKGRINLTRR (70 aa)) folds into the S1 motif domain.

It belongs to the polyribonucleotide nucleotidyltransferase family. It depends on Mg(2+) as a cofactor.

It is found in the cytoplasm. It catalyses the reaction RNA(n+1) + phosphate = RNA(n) + a ribonucleoside 5'-diphosphate. In terms of biological role, involved in mRNA degradation. Catalyzes the phosphorolysis of single-stranded polyribonucleotides processively in the 3'- to 5'-direction. This Gloeobacter violaceus (strain ATCC 29082 / PCC 7421) protein is Polyribonucleotide nucleotidyltransferase.